Reading from the N-terminus, the 106-residue chain is Large ribosomal subunit protein eL30 (106 aa).

Belongs to the eukaryotic ribosomal protein eL30 family.

The protein is Large ribosomal subunit protein eL30 of Methanococcus maripaludis (strain C5 / ATCC BAA-1333).